The chain runs to 749 residues: G-type lectin S-receptor-like serine/threonine-protein kinase At1g61460 (749 aa).

The first 25 residues, M1–A25, serve as a signal peptide directing secretion. The 120-residue stretch at G26 to F145 folds into the Bulb-type lectin domain. The Extracellular segment spans residues G26–T392. N54, N95, N118, and N135 each carry an N-linked (GlcNAc...) asparagine glycan. Residues P247–E280 form the EGF-like; atypical domain. 2 disulfide bridges follow: C251-C263 and C257-C268. N-linked (GlcNAc...) asparagine glycosylation is found at N286, N302, and N341. Residues C299 to R381 enclose the PAN domain. 2 disulfides stabilise this stretch: C334-C355 and C338-C344. Residues I393 to F413 traverse the membrane as a helical segment. At W414–R749 the chain is on the cytoplasmic side. Residues F454–F721 enclose the Protein kinase domain. ATP contacts are provided by residues L460–V468 and K482. Positions R543–I560 are caM-binding. D579 functions as the Proton acceptor in the catalytic mechanism.

It belongs to the protein kinase superfamily. Ser/Thr protein kinase family.

The protein localises to the cell membrane. It catalyses the reaction L-seryl-[protein] + ATP = O-phospho-L-seryl-[protein] + ADP + H(+). The catalysed reaction is L-threonyl-[protein] + ATP = O-phospho-L-threonyl-[protein] + ADP + H(+). The chain is G-type lectin S-receptor-like serine/threonine-protein kinase At1g61460 from Arabidopsis thaliana (Mouse-ear cress).